We begin with the raw amino-acid sequence, 228 residues long: PKHD-type hydroxylase XAC2942 (228 aa).

The Fe2OG dioxygenase domain maps to 78–180 (RIYPPLFNRY…RVACFFWAQS (103 aa)). Fe cation-binding residues include H96, D98, and H161. R171 is a binding site for 2-oxoglutarate.

The cofactor is Fe(2+). L-ascorbate is required as a cofactor.

The sequence is that of PKHD-type hydroxylase XAC2942 from Xanthomonas axonopodis pv. citri (strain 306).